The following is a 309-amino-acid chain: Ribonuclease Z (309 aa).

Positions 63, 65, 67, 68, 145, 216, and 274 each coordinate Zn(2+). Catalysis depends on Asp67, which acts as the Proton acceptor.

This sequence belongs to the RNase Z family. Homodimer. The cofactor is Zn(2+).

It carries out the reaction Endonucleolytic cleavage of RNA, removing extra 3' nucleotides from tRNA precursor, generating 3' termini of tRNAs. A 3'-hydroxy group is left at the tRNA terminus and a 5'-phosphoryl group is left at the trailer molecule.. Its function is as follows. Zinc phosphodiesterase, which displays some tRNA 3'-processing endonuclease activity. Probably involved in tRNA maturation, by removing a 3'-trailer from precursor tRNA. This is Ribonuclease Z from Streptococcus equi subsp. equi (strain 4047).